Consider the following 711-residue polypeptide: MLNFFAAAPRGYEYALSLELAELGASEIKESVAGVYFSAPLELGYRITLWSRLASRIIFVIYKGPCESPEQLYNAAYGIDWQMQFSNRSTFSIDFHGLGGFIKNTQFGALKIKDAIVDRFRDDDFSRPNVERVDADFRIDAHFRRGEITIGINFSGPALHKRGYRSTTGEAPLKENLAANMLVRSGWQADKVDLLDPFCGSGTILIEAAMMACDIAPGIHRERFGFDHWLPHNKKVWQELLNEAQARASIGKTRCEIKFFGSDIDSRLVALAKRNAENAGVLELIDFSVGNALTIDVPVESGFLISNPPYGERLGNVTSLLQLYYQLGDKFKAEFGGWSIAILNSDIELLSALKLKADKQMKMNNGALECAFNLYTVHAENTRRVDPANIKIEGDVSDIAVPFANRIKKNFKQLEKWAKKEGIDSYRLYDADLPEYNVAVDKYLDYVVIQEYSAPSQIPEAVTKRRLTDVLISLPSAIGIDPNHIILKTRERKKGTNQYEKLVANKLELITTEYGAKFKLNLKEYLDTGLFLDHRLTRKLVGEKSKGRSVCNLFSYTGSASVHAALGGATSVTTVDMSNTYIDWAKENFALNGLNSDKYQFVQANCLQWMKRTHDRFDLIFIDPPTFSNSKRMEDSFDVERDHVAMLSDVFKLLNPGGEIIFSNNKRKFKMEIAALEAQGMSIKNIDNQTLPLDFKRNPHIHNTWLITHAG.

Positions 43–154 (LGYRITLWSR…RGEITIGINF (112 aa)) constitute a THUMP domain.

It belongs to the methyltransferase superfamily. RlmKL family.

It is found in the cytoplasm. It catalyses the reaction guanosine(2445) in 23S rRNA + S-adenosyl-L-methionine = N(2)-methylguanosine(2445) in 23S rRNA + S-adenosyl-L-homocysteine + H(+). The enzyme catalyses guanosine(2069) in 23S rRNA + S-adenosyl-L-methionine = N(2)-methylguanosine(2069) in 23S rRNA + S-adenosyl-L-homocysteine + H(+). In terms of biological role, specifically methylates the guanine in position 2445 (m2G2445) and the guanine in position 2069 (m7G2069) of 23S rRNA. This Shewanella pealeana (strain ATCC 700345 / ANG-SQ1) protein is Ribosomal RNA large subunit methyltransferase K/L.